Reading from the N-terminus, the 316-residue chain is MTKEFHHVTVLLHETIDMLDVKPDGIYVDATLGGAGHSEYLLSKLSEKGHLYAFDQDQNAIDNAQKRLAPYIEKGMVTFIKDNFRHLQARLREAGVQEIDGICYDLGVSSPQLDQRERGFSYKKDAPLDMRMNQDASLTAYEVVNHYDYHDLVRIFFKYGEDKFSKQIARKIEQAREVKPIETTTELAEIIKLVKPAKELKKKGHPAKQIFQAIRIEVNDELGAADESIQQAMDMLALDGRISVITFHSLEDRLTKQLFKEASTVEVPKGLPFIPDDLKPKMELVSRKPILPSAEELEANNRSHSAKLRVARKIHK.

S-adenosyl-L-methionine contacts are provided by residues 35 to 37 (AGH), Asp55, Phe84, Asp105, and Gln112.

The protein belongs to the methyltransferase superfamily. RsmH family.

Its subcellular location is the cytoplasm. The catalysed reaction is cytidine(1402) in 16S rRNA + S-adenosyl-L-methionine = N(4)-methylcytidine(1402) in 16S rRNA + S-adenosyl-L-homocysteine + H(+). Specifically methylates the N4 position of cytidine in position 1402 (C1402) of 16S rRNA. The chain is Ribosomal RNA small subunit methyltransferase H from Streptococcus pneumoniae (strain P1031).